The sequence spans 630 residues: Pentatricopeptide repeat-containing protein At1g26460, mitochondrial (630 aa).

The N-terminal 115 residues, methionine 1–asparagine 115, are a transit peptide targeting the mitochondrion. The segment at leucine 42–serine 79 is disordered. A compositionally biased stretch (polar residues) spans alanine 67–tryptophan 77. 6 PPR repeats span residues aspartate 154 to proline 189, asparagine 190 to serine 224, aspartate 227 to leucine 261, serine 468 to proline 503, asparagine 504 to proline 538, and aspartate 539 to proline 573.

The protein belongs to the PPR family. P subfamily.

The protein localises to the mitochondrion. The polypeptide is Pentatricopeptide repeat-containing protein At1g26460, mitochondrial (Arabidopsis thaliana (Mouse-ear cress)).